An 876-amino-acid polypeptide reads, in one-letter code: Alanine--tRNA ligase (876 aa).

4 residues coordinate Zn(2+): H568, H572, C669, and H673.

Belongs to the class-II aminoacyl-tRNA synthetase family. It depends on Zn(2+) as a cofactor.

The protein localises to the cytoplasm. It catalyses the reaction tRNA(Ala) + L-alanine + ATP = L-alanyl-tRNA(Ala) + AMP + diphosphate. In terms of biological role, catalyzes the attachment of alanine to tRNA(Ala) in a two-step reaction: alanine is first activated by ATP to form Ala-AMP and then transferred to the acceptor end of tRNA(Ala). Also edits incorrectly charged Ser-tRNA(Ala) and Gly-tRNA(Ala) via its editing domain. This Sulfurihydrogenibium sp. (strain YO3AOP1) protein is Alanine--tRNA ligase.